The sequence spans 643 residues: 1-deoxy-D-xylulose-5-phosphate synthase (643 aa).

Thiamine diphosphate is bound by residues H78 and 119–121; that span reads AHS. D150 provides a ligand contact to Mg(2+). Residues 151-152, N179, Y288, and E370 contribute to the thiamine diphosphate site; that span reads GS. Residue N179 coordinates Mg(2+).

This sequence belongs to the transketolase family. DXPS subfamily. As to quaternary structure, homodimer. Mg(2+) serves as cofactor. It depends on thiamine diphosphate as a cofactor.

It catalyses the reaction D-glyceraldehyde 3-phosphate + pyruvate + H(+) = 1-deoxy-D-xylulose 5-phosphate + CO2. It participates in metabolic intermediate biosynthesis; 1-deoxy-D-xylulose 5-phosphate biosynthesis; 1-deoxy-D-xylulose 5-phosphate from D-glyceraldehyde 3-phosphate and pyruvate: step 1/1. Catalyzes the acyloin condensation reaction between C atoms 2 and 3 of pyruvate and glyceraldehyde 3-phosphate to yield 1-deoxy-D-xylulose-5-phosphate (DXP). This chain is 1-deoxy-D-xylulose-5-phosphate synthase, found in Brucella abortus (strain S19).